Consider the following 37-residue polypeptide: Conotoxin r11e (37 aa).

4 disulfide bridges follow: C2–C16, C9–C21, C15–C26, and C20–C33. 4-carboxyglutamate occurs at positions 13 and 14. A 6'-bromotryptophan modification is found at W34.

As to expression, expressed by the venom duct.

The protein resides in the secreted. Its function is as follows. Causes hyperactivity, circular motion, convulsion, urination and death, when injected into 13- to 15-day-old mice. Causes gasping, backward swimming or swimming in a vertical direction and death, when intraperitoneally injected into goldfish. The chain is Conotoxin r11e from Conus radiatus (Rayed cone).